Here is a 196-residue protein sequence, read N- to C-terminus: MIPVVIEQTSRGERSYDIYSRLLKDRIIMLTGPVEDNMANSIIAQLLFLDAQDNTKDIYLYINSPGGSVSAGLAIVDTMNFIKSDVQTIVMGIAASMGTIIASSGAKGKRFMLPNAEYLIHQPMGGTGGGTQQSDMAIAAEQLLKTRKKLEKILSDNSGKTIKQIHKDAERDYWMDAKETLKYGFIDEIMENNELK.

The active-site Nucleophile is the S96. H121 is a catalytic residue.

Belongs to the peptidase S14 family. Fourteen ClpP subunits assemble into 2 heptameric rings which stack back to back to give a disk-like structure with a central cavity, resembling the structure of eukaryotic proteasomes.

Its subcellular location is the cytoplasm. It carries out the reaction Hydrolysis of proteins to small peptides in the presence of ATP and magnesium. alpha-casein is the usual test substrate. In the absence of ATP, only oligopeptides shorter than five residues are hydrolyzed (such as succinyl-Leu-Tyr-|-NHMec, and Leu-Tyr-Leu-|-Tyr-Trp, in which cleavage of the -Tyr-|-Leu- and -Tyr-|-Trp bonds also occurs).. Its function is as follows. Cleaves peptides in various proteins in a process that requires ATP hydrolysis. Has a chymotrypsin-like activity. Plays a major role in the degradation of misfolded proteins. This is ATP-dependent Clp protease proteolytic subunit from Streptococcus mutans serotype c (strain ATCC 700610 / UA159).